The primary structure comprises 460 residues: Cysteine--tRNA ligase (460 aa).

A Zn(2+)-binding site is contributed by Cys-29. Residues 31 to 41 carry the 'HIGH' region motif; the sequence is MTIYDLCHIGH. 3 residues coordinate Zn(2+): Cys-213, His-238, and Glu-242. Residues 270–274 carry the 'KMSKS' region motif; that stretch reads KMSKS. Position 273 (Lys-273) interacts with ATP.

The protein belongs to the class-I aminoacyl-tRNA synthetase family. Monomer. The cofactor is Zn(2+).

It is found in the cytoplasm. It carries out the reaction tRNA(Cys) + L-cysteine + ATP = L-cysteinyl-tRNA(Cys) + AMP + diphosphate. The chain is Cysteine--tRNA ligase from Verminephrobacter eiseniae (strain EF01-2).